The primary structure comprises 342 residues: (Lyso)-N-acylphosphatidylethanolamine lipase (342 aa).

The region spanning Pro70 to Tyr323 is the AB hydrolase-1 domain.

This sequence belongs to the peptidase S33 family. ABHD4/ABHD5 subfamily. In terms of tissue distribution, highest levels in the CNS and in testis, intermediate levels in liver and kidney. Hardly detectable in heart.

The catalysed reaction is N-hexadecanoyl-1,2-di-(9Z-octadecenoyl)-sn-glycero-3-phosphoethanolamine + H2O = N-hexadecanoyl-1-(9Z-octadecenoyl)-sn-glycero-3-phosphoethanolamine + (9Z)-octadecenoate + H(+). The enzyme catalyses an N-acyl-1,2-diacyl-sn-glycero-3-phosphoethanolamine + H2O = N,1-diacyl-sn-glycero-3-phosphoethanolamine + a fatty acid + H(+). It catalyses the reaction N-hexadecanoyl-1-(9Z-octadecenoyl)-sn-glycero-3-phosphoethanolamine + H2O = N-hexadecanoyl-sn-glycero-3-phosphoethanolamine + (9Z)-octadecenoate + H(+). It carries out the reaction N-octadecanoyl-1-(9Z-octadecenoyl)-sn-glycero-3-phosphoethanolamine + H2O = N-octadecanoyl-sn-glycero-3-phospho-ethanolamine + (9Z)-octadecenoate + H(+). The catalysed reaction is N-eicosanoyl-1-(9Z-octadecenoyl)-sn-glycero-3-phosphoethanolamine + H2O = N-eicosanoyl-sn-glycero-3-phosphoethanolamine + (9Z)-octadecenoate + H(+). The enzyme catalyses N,1-di-(9Z-octadecenoyl)-sn-glycero-3-phosphoethanolamine + H2O = N-(9Z-octadecenoyl)-sn-glycero-3-phosphoethanolamine + (9Z)-octadecenoate + H(+). It catalyses the reaction N-(5Z,8Z,11Z,14Z-eicosatetraenoyl)-1-(9Z-octadecenoyl)-sn-glycero-3-phosphoethanolamine + H2O = N-(5Z,8Z,11Z,14Z-eicosatetraenoyl)-sn-glycero-3-phosphoethanolamine + (9Z)-octadecenoate + H(+). It carries out the reaction 1-octadecanoyl-2-(9Z-octadecenoyl)-sn-glycero-3-phospho-(N-hexadecanoyl)-serine + H2O = 1-octadecanoyl-2-hydroxy-sn-glycero-3-phospho-(N-hexadecanoyl)-serine + (9Z)-octadecenoate + H(+). The catalysed reaction is 1-O-(1Z-octadecenoyl)-2-(9Z-octadecenoyl)-sn-glycero-3-phospho-N-hexadecanoyl-ethanolamine + H2O = 1-O-(1Z-octadecenyl)-sn-glycero-3-phospho-N-hexadecanoyl-ethanolamine + (9Z)-octadecenoate + H(+). The enzyme catalyses N,1-diacyl-sn-glycero-3-phosphoethanolamine + H2O = N-acyl-sn-glycero-3-phosphoethanolamine + a fatty acid + H(+). In terms of biological role, lysophospholipase selective for N-acyl phosphatidylethanolamine (NAPE). Contributes to the biosynthesis of N-acyl ethanolamines, including the endocannabinoid anandamide by hydrolyzing the sn-1 and sn-2 acyl chains from N-acyl phosphatidylethanolamine (NAPE) generating glycerophospho-N-acyl ethanolamine (GP-NAE), an intermediate for N-acyl ethanolamine biosynthesis. Hydrolyzes substrates bearing saturated, monounsaturated, polyunsaturated N-acyl chains. Shows no significant activity towards other lysophospholipids, including lysophosphatidylcholine, lysophosphatidylethanolamine and lysophosphatidylserine. The protein is (Lyso)-N-acylphosphatidylethanolamine lipase of Mus musculus (Mouse).